Reading from the N-terminus, the 160-residue chain is Ubiquitin-like protein 4A (160 aa).

One can recognise a Ubiquitin-like domain in the interval 1–76 (MQLTVKALQG…LNLVVKPLEK (76 aa)). A Glycyl lysine isopeptide (Lys-Gly) (interchain with G-Cter in ubiquitin) cross-link involves residue Lys48. Positions 99–141 (WQLIAKVLARHFSAADASRVLDQLQRDYERSLSRLTLDDIERL) are required and sufficient for interaction with BAG6.

As to quaternary structure, component of the BAG6/BAT3 complex, at least composed of BAG6, UBL4A and GET4/TRC35. Interacts with BAG6; the interaction is direct and required for UBL4A protein stability. Interacts with USP13; may be indirect via BAG6. Post-translationally, polyubiquitinated. Ubiquitination by AMFR and deubiquitination by USP13 may regulate the interaction between the BAG6/BAT complex and SGTA and therefore may regulate client proteins fate.

The protein resides in the cytoplasm. It localises to the cytosol. The protein localises to the nucleus. In terms of biological role, as part of a cytosolic protein quality control complex, the BAG6/BAT3 complex, maintains misfolded and hydrophobic patches-containing proteins in a soluble state and participates in their proper delivery to the endoplasmic reticulum or alternatively can promote their sorting to the proteasome where they undergo degradation. The BAG6/BAT3 complex is involved in the post-translational delivery of tail-anchored/type II transmembrane proteins to the endoplasmic reticulum membrane. Recruited to ribosomes, it interacts with the transmembrane region of newly synthesized tail-anchored proteins and together with SGTA and ASNA1 mediates their delivery to the endoplasmic reticulum. Client proteins that cannot be properly delivered to the endoplasmic reticulum are ubiquitinated and sorted to the proteasome. Similarly, the BAG6/BAT3 complex also functions as a sorting platform for proteins of the secretory pathway that are mislocalized to the cytosol either delivering them to the proteasome for degradation or to the endoplasmic reticulum. The BAG6/BAT3 complex also plays a role in the endoplasmic reticulum-associated degradation (ERAD), a quality control mechanism that eliminates unwanted proteins of the endoplasmic reticulum through their retrotranslocation to the cytosol and their targeting to the proteasome. It maintains these retrotranslocated proteins in an unfolded yet soluble state condition in the cytosol to ensure their proper delivery to the proteasome. This is Ubiquitin-like protein 4A (UBL4A) from Rhinolophus ferrumequinum (Greater horseshoe bat).